We begin with the raw amino-acid sequence, 860 residues long: DNA mismatch repair protein MutS (860 aa).

G606 to S613 lines the ATP pocket.

It belongs to the DNA mismatch repair MutS family.

Functionally, this protein is involved in the repair of mismatches in DNA. It is possible that it carries out the mismatch recognition step. This protein has a weak ATPase activity. This is DNA mismatch repair protein MutS from Geobacillus sp. (strain WCH70).